Consider the following 181-residue polypeptide: Large ribosomal subunit protein uL10 (181 aa).

The protein belongs to the universal ribosomal protein uL10 family. As to quaternary structure, part of the ribosomal stalk of the 50S ribosomal subunit. The N-terminus interacts with L11 and the large rRNA to form the base of the stalk. The C-terminus forms an elongated spine to which L12 dimers bind in a sequential fashion forming a multimeric L10(L12)X complex.

Its function is as follows. Forms part of the ribosomal stalk, playing a central role in the interaction of the ribosome with GTP-bound translation factors. The protein is Large ribosomal subunit protein uL10 of Nostoc sp. (strain PCC 7120 / SAG 25.82 / UTEX 2576).